Reading from the N-terminus, the 115-residue chain is Large ribosomal subunit protein uL18 (115 aa).

Belongs to the universal ribosomal protein uL18 family. In terms of assembly, part of the 50S ribosomal subunit; part of the 5S rRNA/L5/L18/L25 subcomplex. Contacts the 5S and 23S rRNAs.

Functionally, this is one of the proteins that bind and probably mediate the attachment of the 5S RNA into the large ribosomal subunit, where it forms part of the central protuberance. This Marinobacter nauticus (strain ATCC 700491 / DSM 11845 / VT8) (Marinobacter aquaeolei) protein is Large ribosomal subunit protein uL18.